The sequence spans 932 residues: DNA mismatch repair protein MutS (932 aa).

A compositionally biased stretch (acidic residues) spans Met-1–Thr-13. The segment at Met-1–Met-26 is disordered. Residue Gly-648–Ser-655 coordinates ATP. The disordered stretch occupies residues Asn-865–Asn-892.

Belongs to the DNA mismatch repair MutS family.

Its function is as follows. This protein is involved in the repair of mismatches in DNA. It is possible that it carries out the mismatch recognition step. This protein has a weak ATPase activity. In Haloquadratum walsbyi (strain DSM 16790 / HBSQ001), this protein is DNA mismatch repair protein MutS.